Here is a 945-residue protein sequence, read N- to C-terminus: Chaperone protein ClpD, chloroplastic (945 aa).

The N-terminal 89 residues, 1 to 89, are a transit peptide targeting the chloroplast; the sequence is MEVLSTSSPL…FERFTERAIR (89 aa). 2 repeat regions span residues 90 to 146 and 168 to 233; these read AIIF…WDEA and FSIS…LKGE. Residues 90–233 enclose the Clp R domain; sequence AIIFSQKEAK…AAALTRLKGE (144 aa). The interval 233 to 264 is disordered; that stretch reads EIAKDGREPSSSSKGSFESPPSGRIAGSGPGG. The segment covering 241 to 255 has biased composition (low complexity); it reads PSSSSKGSFESPPSG. The segment at 271–523 is i; it reads LEQFCVDLTA…RARIEAFRKK (253 aa). 316–323 lines the ATP pocket; that stretch reads GEAGVGKT. A disordered region spans residues 555 to 586; sequence SRQKQDDGDAISDESGELVEESSLPPAAGDDE. Residues 562-574 are compositionally biased toward acidic residues; that stretch reads GDAISDESGELVE. The tract at residues 590–781 is II; the sequence is VGPDDIAAVA…LIIMTSNVGS (192 aa). 664 to 671 contacts ATP; the sequence is GPTGVGKT.

This sequence belongs to the ClpA/ClpB family. ClpD subfamily. As to quaternary structure, homodimer and homohexamer. Hexamerization upon addition of ATP. Interacts with CLPT1. Stably associated with the import machinery. Mg(2+) is required as a cofactor. As to expression, expressed in stems and leaves.

It localises to the plastid. It is found in the chloroplast stroma. The catalysed reaction is ATP + H2O = ADP + phosphate + H(+). Its function is as follows. Molecular chaperone that interact with a ClpP-like protease involved in degradation of denatured proteins in the chloroplast. The ATPase activity of CLPD is stimulated by CLPT1. Has no ADPase activity. Interacts with transit peptides with a positional preference. Localization of the signal sequence at the N-terminal end of a protein seems mandatory for interaction to take place. The sequence is that of Chaperone protein ClpD, chloroplastic from Arabidopsis thaliana (Mouse-ear cress).